The primary structure comprises 555 residues: Serine/threonine-protein kinase AGC1-7 (555 aa).

Positions 1–126 are disordered; it reads MLTKPGKKLD…PSKPHTGGDI (126 aa). Composition is skewed to basic and acidic residues over residues 7-16 and 35-54; these read KKLDSSESTH and PRKE…DNLI. The span at 84-118 shows a compositional bias: low complexity; sequence SQSNLNTKPNNNNSNNNSNMSSRSNSIESTSSNPS. One can recognise a Protein kinase domain in the interval 146-480; that stretch reads FRLLKRLGYG…ATEIKQHPFF (335 aa). ATP contacts are provided by residues 152–160 and K175; that span reads LGYGDIGSV. D271 (proton acceptor) is an active-site residue. One can recognise an AGC-kinase C-terminal domain in the interval 481–555; sequence EGVNWALIRS…DPDYIDFEYF (75 aa). The interval 514 to 547 is disordered; it reads AAVDGGGKKNNNGAGGGCSTGGGDNKPNGDCNDP. The segment covering 526–537 has biased composition (gly residues); the sequence is GAGGGCSTGGGD.

Belongs to the protein kinase superfamily. AGC Ser/Thr protein kinase family. Interacts with PDPK1/PDK1. Autophosphorylated and phosphorylated by PDPK1/PDK1. In terms of tissue distribution, specifically expressed in pollen grains.

The protein localises to the cytoplasm. It carries out the reaction L-seryl-[protein] + ATP = O-phospho-L-seryl-[protein] + ADP + H(+). The enzyme catalyses L-threonyl-[protein] + ATP = O-phospho-L-threonyl-[protein] + ADP + H(+). With respect to regulation, activated by PDPK1/PDK1. Functionally, functions redudantly with AGC1-5 as signaling component in the pollen tube. Required for polarized growth of pollen tubes. The polypeptide is Serine/threonine-protein kinase AGC1-7 (Arabidopsis thaliana (Mouse-ear cress)).